Here is a 351-residue protein sequence, read N- to C-terminus: Ion-translocating oxidoreductase complex subunit D (351 aa).

The next 4 membrane-spanning stretches (helical) occupy residues 18–38 (IMLL…YFFG), 40–60 (GSLI…GAVL), 87–107 (LPPL…IVIA), and 121–141 (PAMV…TSWL). FMN phosphoryl threonine is present on Thr185. The next 5 helical transmembrane spans lie at 211–231 (VLAG…GLLL), 241–261 (IPVS…MIAP), 264–284 (FASP…FFIA), 298–318 (LIFG…GGYP), and 320–340 (GVAF…HYTQ).

The protein belongs to the NqrB/RnfD family. In terms of assembly, the complex is composed of six subunits: RnfA, RnfB, RnfC, RnfD, RnfE and RnfG. FMN is required as a cofactor.

The protein localises to the cell inner membrane. Part of a membrane-bound complex that couples electron transfer with translocation of ions across the membrane. This is Ion-translocating oxidoreductase complex subunit D from Yersinia pseudotuberculosis serotype O:1b (strain IP 31758).